We begin with the raw amino-acid sequence, 350 residues long: Probable arabinogalactan endo-beta-1,4-galactanase A (350 aa).

Residues 1–16 (MIYSLLLSALPLLSSA) form the signal peptide. Residue Asn128 is glycosylated (N-linked (GlcNAc...) asparagine). The active-site Proton donor is the Glu152. The active-site Nucleophile is Glu262.

The protein belongs to the glycosyl hydrolase 53 family.

The protein resides in the secreted. The enzyme catalyses The enzyme specifically hydrolyzes (1-&gt;4)-beta-D-galactosidic linkages in type I arabinogalactans.. Its function is as follows. Endogalactanase involved in the degradation of plant cell wall polysaccharides, and more particularly of hairy regions of pectin. This chain is Probable arabinogalactan endo-beta-1,4-galactanase A (galA), found in Aspergillus niger (strain ATCC MYA-4892 / CBS 513.88 / FGSC A1513).